Consider the following 190-residue polypeptide: Nodulation protein L (190 aa).

This sequence belongs to the transferase hexapeptide repeat family.

Acetyltransferase implicated in the O-acetylation of Nod factors. The chain is Nodulation protein L (nodL) from Rhizobium leguminosarum bv. viciae.